The primary structure comprises 42 residues: uncharacterized protein (42 aa).

Residues proline 15–isoleucine 37 traverse the membrane as a helical segment.

The protein resides in the membrane. This is an uncharacterized protein from Dictyostelium discoideum (Social amoeba).